A 324-amino-acid chain; its full sequence is NADH-ubiquinone oxidoreductase chain 1 (324 aa).

8 helical membrane-spanning segments follow: residues 9-29, 75-95, 106-126, 146-166, 177-197, 228-248, 259-279, and 299-319; these read LINP…LTLI, FLFL…WAPM, LGIL…LGSG, ISYE…SGGY, SIWL…STLA, LFFL…AVLF, ELTT…FLWV, and FLPL…ALAG.

It belongs to the complex I subunit 1 family.

The protein resides in the mitochondrion inner membrane. It catalyses the reaction a ubiquinone + NADH + 5 H(+)(in) = a ubiquinol + NAD(+) + 4 H(+)(out). Core subunit of the mitochondrial membrane respiratory chain NADH dehydrogenase (Complex I) that is believed to belong to the minimal assembly required for catalysis. Complex I functions in the transfer of electrons from NADH to the respiratory chain. The immediate electron acceptor for the enzyme is believed to be ubiquinone. This chain is NADH-ubiquinone oxidoreductase chain 1 (MT-ND1), found in Cyprinus carpio (Common carp).